Here is a 95-residue protein sequence, read N- to C-terminus: Small ribosomal subunit protein bS6 (95 aa).

This sequence belongs to the bacterial ribosomal protein bS6 family.

Functionally, binds together with bS18 to 16S ribosomal RNA. The polypeptide is Small ribosomal subunit protein bS6 (Bacillus licheniformis (strain ATCC 14580 / DSM 13 / JCM 2505 / CCUG 7422 / NBRC 12200 / NCIMB 9375 / NCTC 10341 / NRRL NRS-1264 / Gibson 46)).